A 241-amino-acid chain; its full sequence is Translation initiation factor IF-3 (241 aa).

The segment at K178–A241 is disordered. Over residues T180–A197 the composition is skewed to basic and acidic residues. Residues A208–E229 show a composition bias toward acidic residues. Positions A230–A241 are enriched in low complexity.

Belongs to the IF-3 family. As to quaternary structure, monomer.

It is found in the cytoplasm. Its function is as follows. IF-3 binds to the 30S ribosomal subunit and shifts the equilibrium between 70S ribosomes and their 50S and 30S subunits in favor of the free subunits, thus enhancing the availability of 30S subunits on which protein synthesis initiation begins. The sequence is that of Translation initiation factor IF-3 from Streptomyces avermitilis (strain ATCC 31267 / DSM 46492 / JCM 5070 / NBRC 14893 / NCIMB 12804 / NRRL 8165 / MA-4680).